The sequence spans 437 residues: F-box/FBD/LRR-repeat protein At5g22700 (437 aa).

Positions 5–51 (GDRISSLPDELLCQILSNLPTKNAVTTSILSTRWRSIWLSTPVLDID) constitute an F-box domain. LRR repeat units lie at residues 86 to 113 (RDDVDMCTIMPWIQDAVNRRIQHLEVDC), 134 to 160 (SLRLHFVTLHRYEFVSLPNLKVMHLEE), 161 to 186 (NIYYCLETLENFISSCPVLEDLTVVR), 187 to 210 (IVDIITEKILRVRSRSLNSLKLVL), 215 to 240 (GWFIDDIDEWKVIIDAPRLAYLSLKD), 272 to 297 (PVTFERSNVGKLLTGLSSIRDLTISG), and 322 to 350 (NARFYDCDLEMLPCVLESCPNLKSLVLGL). Residues 361–406 (RVSSVPPCFLSSLEFVEIRSRLCRKRYVMKVARYFAKNSVMLKKFV) form the FBD domain.

The sequence is that of F-box/FBD/LRR-repeat protein At5g22700 from Arabidopsis thaliana (Mouse-ear cress).